The chain runs to 105 residues: U2-lycotoxin-Ls1c (105 aa).

A signal peptide spans 1–17 (MIKYVLISALLVVAVYS). The propeptide occupies 18–41 (FTIEDSEDALLEEAEDELDTEEER). Cystine bridges form between C51/C67, C58/C97, C60/C83, and C69/C81.

It belongs to the neurotoxin 04 (omega-agtx) family. 01 (type I omega-agtx) subfamily. In terms of tissue distribution, expressed by the venom gland.

It localises to the secreted. Functionally, insecticidal to house crickets. It induces an excitatory slow-onset impact that leads to irreversible spastic paralysis. It also modifies human voltage-gated potassium channel Kv1.5/KCNA5. Most likely, it binds to the voltage-sensing domain of the channel, suggesting it does not block the pore but prevents its opening at physiological membrane potentials. The recombinant peptide binds to the channel in an irreversible manner and slows down the hKv1.5 current activation kinetics. It is not toxic to mice, when intracranially injected (at 0.5 ug/g mouse). The chain is U2-lycotoxin-Ls1c from Lycosa singoriensis (Wolf spider).